A 264-amino-acid polypeptide reads, in one-letter code: Thymidylate synthase (264 aa).

R21 is a dUMP binding site. H51 provides a ligand contact to (6R)-5,10-methylene-5,6,7,8-tetrahydrofolate. 126–127 (RR) lines the dUMP pocket. Catalysis depends on C146, which acts as the Nucleophile. Residues 166–169 (RSVD), N177, and 207–209 (HLY) each bind dUMP. D169 contributes to the (6R)-5,10-methylene-5,6,7,8-tetrahydrofolate binding site. S263 contributes to the (6R)-5,10-methylene-5,6,7,8-tetrahydrofolate binding site.

Belongs to the thymidylate synthase family. Bacterial-type ThyA subfamily. In terms of assembly, homodimer.

Its subcellular location is the cytoplasm. It catalyses the reaction dUMP + (6R)-5,10-methylene-5,6,7,8-tetrahydrofolate = 7,8-dihydrofolate + dTMP. The protein operates within pyrimidine metabolism; dTTP biosynthesis. Catalyzes the reductive methylation of 2'-deoxyuridine-5'-monophosphate (dUMP) to 2'-deoxythymidine-5'-monophosphate (dTMP) while utilizing 5,10-methylenetetrahydrofolate (mTHF) as the methyl donor and reductant in the reaction, yielding dihydrofolate (DHF) as a by-product. This enzymatic reaction provides an intracellular de novo source of dTMP, an essential precursor for DNA biosynthesis. In Anoxybacillus flavithermus (strain DSM 21510 / WK1), this protein is Thymidylate synthase.